The sequence spans 97 residues: Carboxypeptidase inhibitor (97 aa).

The N-terminal stretch at 1–22 (MAATLPVFAVVFFAMVLASSQA) is a signal peptide.

It is found in the secreted. In terms of biological role, potent competitive inhibitor of metallo-carboxypeptidases CPA1, CPA2, CPB, CPN, and TAF1a. Also inhibits human CPA4. Accelerates fibrinolysis in vitro and may contribute to the maintenance of host blood liquidity during feeding. This Rhipicephalus bursa (Tick) protein is Carboxypeptidase inhibitor.